Here is a 508-residue protein sequence, read N- to C-terminus: Cytochrome P450 monooxygenase orf4 (508 aa).

Cys447 serves as a coordination point for heme.

This sequence belongs to the cytochrome P450 family. It depends on heme as a cofactor.

The protein operates within mycotoxin biosynthesis. Functionally, cytochrome P450 monooxygenase; part of the gene cluster that mediates the biosynthesis of brefeldin A (BFA), a protein transport inhibitor that shows antiviral, antifungal, and antitumor properties. The proposed biosynthesis of BFA involves formation of an acyclic polyketide chain that is differentially tailored throughout the backbone. The highly reducing polyketide synthase Bref-PKS is proposed to synthesize the precisely reduced octaketide precursor, which could then be directly offloaded by the thiohydrolase enzyme Bref-TH followed by a cytochrome P450 monooxygenase-mediated formation of the cyclopentane ring and macrocyclization to afford 7-deoxy BFA. Alternatively, the first ring annulation can also occur on the ACP-tethered intermediate before the thiohydrolase release and lactonization. The C7-hydroxylation by another cytochrome P450 monooxygenase is believed to be the final step in the process to obtain the final structure of BFA. In addition to the HRPKS Bref-PKS and the thiohydrolase Bref-TH, the brefeldin A biosynthesis cluster contains 4 cytochrome p450 monooxygenases (called orf3 to orf6), as well a the probable cluster-specific transcription regulator orf8. The sequence is that of Cytochrome P450 monooxygenase orf4 from Eupenicillium brefeldianum (Penicillium brefeldianum).